The sequence spans 394 residues: Quinolinate synthase (394 aa).

Iminosuccinate-binding residues include His57 and Ser74. Residue Cys121 participates in [4Fe-4S] cluster binding. Iminosuccinate contacts are provided by residues 153 to 155 and Ser174; that span reads YMN. Cys250 is a binding site for [4Fe-4S] cluster. Iminosuccinate-binding positions include 276 to 278 and Thr293; that span reads HPE. Cys340 contributes to the [4Fe-4S] cluster binding site.

Belongs to the quinolinate synthase family. Type 3 subfamily. [4Fe-4S] cluster serves as cofactor.

The protein localises to the cytoplasm. It catalyses the reaction iminosuccinate + dihydroxyacetone phosphate = quinolinate + phosphate + 2 H2O + H(+). Its pathway is cofactor biosynthesis; NAD(+) biosynthesis; quinolinate from iminoaspartate: step 1/1. Catalyzes the condensation of iminoaspartate with dihydroxyacetone phosphate to form quinolinate. The sequence is that of Quinolinate synthase from Nocardioides sp. (strain ATCC BAA-499 / JS614).